Here is an 803-residue protein sequence, read N- to C-terminus: Ribonuclease II, chloroplastic/mitochondrial (803 aa).

Residues 1-35 (MMSVRAINGCSIIRTATSAGGPPVSLFRHRIQRLR) constitute a chloroplast and mitochondrion transit peptide. Residues 399-694 (RIDLTHLKVY…AHYQIKAFLR (296 aa)) enclose the RNB domain.

This sequence belongs to the RNR ribonuclease family. As to expression, expressed in seedlings, roots, leaves and flowers.

It is found in the mitochondrion. Its subcellular location is the plastid. The protein resides in the chloroplast. The catalysed reaction is Exonucleolytic cleavage in the 3'- to 5'-direction to yield nucleoside 5'-phosphates.. Its function is as follows. 3'-5' exoribonuclease that catalyzes 3' maturation of chloroplast and mitochondrion ribosomal RNAs; degrades short nucleotidic extensions to generate the mature 3'-ends. Involved in the maturation of 23S, 16S and 5S rRNAs. The protein is Ribonuclease II, chloroplastic/mitochondrial (RNR1) of Arabidopsis thaliana (Mouse-ear cress).